Consider the following 864-residue polypeptide: Translation initiation factor IF-2 (864 aa).

Residues 140 to 171 (DSRSLNTKKENKLKISNKDEQNKKFNQHRESN) show a composition bias toward basic and acidic residues. The interval 140 to 179 (DSRSLNTKKENKLKISNKDEQNKKFNQHRESNSFDLNHKK) is disordered. One can recognise a tr-type G domain in the interval 364–533 (IRAPVVTIMG…LLQAEMLELK (170 aa)). The interval 373–380 (GHVDHGKT) is G1. 373–380 (GHVDHGKT) lines the GTP pocket. Residues 398-402 (GITQN) form a G2 region. Positions 419-422 (DTPG) are G3. GTP is bound by residues 419 to 423 (DTPGH) and 473 to 476 (NKID). The tract at residues 473 to 476 (NKID) is G4. Residues 509-511 (SAK) form a G5 region.

Belongs to the TRAFAC class translation factor GTPase superfamily. Classic translation factor GTPase family. IF-2 subfamily.

Its subcellular location is the cytoplasm. In terms of biological role, one of the essential components for the initiation of protein synthesis. Protects formylmethionyl-tRNA from spontaneous hydrolysis and promotes its binding to the 30S ribosomal subunits. Also involved in the hydrolysis of GTP during the formation of the 70S ribosomal complex. The sequence is that of Translation initiation factor IF-2 from Buchnera aphidicola subsp. Acyrthosiphon pisum (strain 5A).